A 375-amino-acid chain; its full sequence is Cyclic AMP receptor 2 (375 aa).

Residues 1 to 10 (MTIMSDIIAQ) are Extracellular-facing. A helical membrane pass occupies residues 11 to 30 (RTILLIADFSSIIGCSLVLI). The Cytoplasmic portion of the chain corresponds to 31–44 (GFWRLKLLRNHITK). The helical transmembrane segment at 45–65 (IISLFCATSLFKDVISTIITL) threads the bilayer. Residues 66–82 (LYKPDQTESGFPCYLHA) are Extracellular-facing. Residues 83–108 (IVITFGSLACWLWTLMLSFSIYNLIV) traverse the membrane as a helical segment. Residues 109 to 119 (RREPEPERFEK) are Cytoplasmic-facing. Residues 120–138 (FYFCLCYGLPLISTIVMLS) traverse the membrane as a helical segment. Over 139 to 161 (THIIQPVGGWCWIGDNYDGYRFG) the chain is Extracellular. The helical transmembrane segment at 162–180 (LFYGPFFFIWGTSAILVGL) threads the bilayer. Topologically, residues 181 to 204 (TSKYTYSVIRSSVSDNKDKHMTYQ) are cytoplasmic. A Phosphoserine modification is found at Ser-192. A helical transmembrane segment spans residues 205–223 (FKLINYIVVFLVCWVFAIV). Residues 224 to 234 (NRILNGLNQFP) lie on the Extracellular side of the membrane. The helical transmembrane segment at 235 to 259 (TVPNVLHTYFSVSHGFYASITFIYN) threads the bilayer. Residues 260–375 (NPLMWRYFGA…NNINNKNDMI (116 aa)) are Cytoplasmic-facing. 2 positions are modified to phosphoserine: Ser-298 and Ser-303. Positions 338 to 375 (PKENENQNHHHHHHHHHHHNHYNNNNNNNNINNKNDMI) are disordered. The span at 346 to 358 (HHHHHHHHHHHNH) shows a compositional bias: basic residues. The segment covering 359–375 (YNNNNNNNNINNKNDMI) has biased composition (low complexity).

Belongs to the G-protein coupled receptor 5 family. C-terminal Ser or Thr residues may be phosphorylated.

The protein resides in the membrane. Its function is as follows. Receptor for cAMP. Coordinates the aggregation of individual cells into a multicellular organism and regulates the expression of a large number of developmentally regulated genes. The activity of this receptor is mediated by G proteins. Plays a key role during tip formation and late development; involved in cAMP-directed patterning of pre stalk cells as they sort before and during tip formation. The chain is Cyclic AMP receptor 2 (carB) from Dictyostelium discoideum (Social amoeba).